Here is a 306-residue protein sequence, read N- to C-terminus: Homeobox protein Hox-C13a (306 aa).

The homeobox DNA-binding region spans 236-295 (GRKKRVPYTKIQLKELEKEYAASKFITKDKRRRISATTNLSERQVTIWFQNRRVKEKKFV).

This sequence belongs to the Abd-B homeobox family.

Its subcellular location is the nucleus. Its function is as follows. Sequence-specific transcription factor which is part of a developmental regulatory system that provides cells with specific positional identities on the anterior-posterior axis. This chain is Homeobox protein Hox-C13a (hoxc13a), found in Danio rerio (Zebrafish).